The primary structure comprises 144 residues: Transcription antitermination protein NusB (144 aa).

The protein belongs to the NusB family.

Functionally, involved in transcription antitermination. Required for transcription of ribosomal RNA (rRNA) genes. Binds specifically to the boxA antiterminator sequence of the ribosomal RNA (rrn) operons. In Leifsonia xyli subsp. xyli (strain CTCB07), this protein is Transcription antitermination protein NusB.